Here is a 234-residue protein sequence, read N- to C-terminus: Enterobactin synthase component D (234 aa).

Mg(2+) contacts are provided by D107, E109, and E152.

It belongs to the P-Pant transferase superfamily. EntD family. As to quaternary structure, entB, EntD, EntE, and EntF form a multienzyme complex called enterobactin synthase. Requires Mg(2+) as cofactor.

It localises to the membrane. It carries out the reaction apo-[aryl-carrier protein] + CoA = holo-[aryl-carrier protein] + adenosine 3',5'-bisphosphate + H(+). It catalyses the reaction apo-[peptidyl-carrier protein] + CoA = holo-[peptidyl-carrier protein] + adenosine 3',5'-bisphosphate + H(+). Its pathway is siderophore biosynthesis; enterobactin biosynthesis. Functionally, involved in the biosynthesis of the siderophore enterobactin (enterochelin), which is a macrocyclic trimeric lactone of N-(2,3-dihydroxybenzoyl)-serine. The serine trilactone serves as a scaffolding for the three catechol functionalities that provide hexadentate coordination for the tightly ligated iron(2+) atoms. Plays an essential role in the assembly of the enterobactin by catalyzing the transfer of the 4'-phosphopantetheine (Ppant) moiety from coenzyme A to the apo-domains of both EntB (ArCP domain) and EntF (PCP domain) to yield their holo-forms which make them competent for the activation of 2,3-dihydroxybenzoate (DHB) and L-serine, respectively. This is Enterobactin synthase component D from Salmonella typhi.